A 421-amino-acid chain; its full sequence is 4-hydroxy-3-methylbut-2-en-1-yl diphosphate synthase (flavodoxin) (421 aa).

Cys-298, Cys-301, Cys-344, and Glu-351 together coordinate [4Fe-4S] cluster.

The protein belongs to the IspG family. Requires [4Fe-4S] cluster as cofactor.

The enzyme catalyses (2E)-4-hydroxy-3-methylbut-2-enyl diphosphate + oxidized [flavodoxin] + H2O + 2 H(+) = 2-C-methyl-D-erythritol 2,4-cyclic diphosphate + reduced [flavodoxin]. Its pathway is isoprenoid biosynthesis; isopentenyl diphosphate biosynthesis via DXP pathway; isopentenyl diphosphate from 1-deoxy-D-xylulose 5-phosphate: step 5/6. In terms of biological role, converts 2C-methyl-D-erythritol 2,4-cyclodiphosphate (ME-2,4cPP) into 1-hydroxy-2-methyl-2-(E)-butenyl 4-diphosphate. This Neisseria meningitidis serogroup C (strain 053442) protein is 4-hydroxy-3-methylbut-2-en-1-yl diphosphate synthase (flavodoxin).